The primary structure comprises 494 residues: Cysteine--tRNA ligase (494 aa).

Cys29 contributes to the Zn(2+) binding site. The 'HIGH' region signature appears at 31 to 41; that stretch reads LTVSDDAHLGH. The disordered stretch occupies residues 187-220; it reads KAGGVSPDDANTHRDDELPPLDGERGQTWASPWG. Over residues 196-211 the composition is skewed to basic and acidic residues; it reads ANTHRDDELPPLDGER. Zn(2+) contacts are provided by Cys230, His255, and Glu259. The 'KMSKS' region signature appears at 287-291; sequence KMSSS.

This sequence belongs to the class-I aminoacyl-tRNA synthetase family. Zn(2+) serves as cofactor.

The protein resides in the cytoplasm. It catalyses the reaction tRNA(Cys) + L-cysteine + ATP = L-cysteinyl-tRNA(Cys) + AMP + diphosphate. This is Cysteine--tRNA ligase from Halobacterium salinarum (strain ATCC 700922 / JCM 11081 / NRC-1) (Halobacterium halobium).